A 474-amino-acid polypeptide reads, in one-letter code: tRNA-2-methylthio-N(6)-dimethylallyladenosine synthase (474 aa).

In terms of domain architecture, MTTase N-terminal spans 3–120 (KKLHIKTWGC…LPEMINHVQG (118 aa)). Residues Cys-12, Cys-49, Cys-83, Cys-157, Cys-161, and Cys-164 each coordinate [4Fe-4S] cluster. Positions 143–375 (RAEGPTAFVS…QQRISQQAME (233 aa)) constitute a Radical SAM core domain. The 64-residue stretch at 378-441 (RKMVGTVQRV…ASSLRGILLR (64 aa)) folds into the TRAM domain.

It belongs to the methylthiotransferase family. MiaB subfamily. In terms of assembly, monomer. [4Fe-4S] cluster is required as a cofactor.

Its subcellular location is the cytoplasm. It catalyses the reaction N(6)-dimethylallyladenosine(37) in tRNA + (sulfur carrier)-SH + AH2 + 2 S-adenosyl-L-methionine = 2-methylsulfanyl-N(6)-dimethylallyladenosine(37) in tRNA + (sulfur carrier)-H + 5'-deoxyadenosine + L-methionine + A + S-adenosyl-L-homocysteine + 2 H(+). Its function is as follows. Catalyzes the methylthiolation of N6-(dimethylallyl)adenosine (i(6)A), leading to the formation of 2-methylthio-N6-(dimethylallyl)adenosine (ms(2)i(6)A) at position 37 in tRNAs that read codons beginning with uridine. The sequence is that of tRNA-2-methylthio-N(6)-dimethylallyladenosine synthase from Yersinia pestis bv. Antiqua (strain Angola).